Consider the following 642-residue polypeptide: MSAATETEVREFQTEVSQLLDLMIHALYSNKEIFLRELISNASDANDKLRFAGLSDDSLFEGDSELTIKLEFDKEAGTFSIMDNGIGMSRDEVISNIGTIAKSGTKEFFKSLTGDQQRDAHLIGQFGVGFYSSFIVADKVTLETRKAGAGAEQGVRWISAGDGSYTLENMEKAERGTRITLHMREDEKEFLDAWRLRSIVRKFSDHVTWPVKMLEELPPAPPAKEGEEPEPPKTPEWETVNKASALWTLSKNDITEDEYKEFYKHVGHDFEDPMEWVHARMEGRMEYTLLLYIPGRAPFDLWDRDRRGGLKLFVRRVFIMDTSEELLPRYLRFVRGVIDSADLPLNVSREILQQNRQVEAIKKGLVHKVLGMLEEMLKNDPEKYATFWKEFGMVLKEGMIEDFANKERIAKLCRFSTTHDGERVPKIALADYVERMKEGQEAIYYVTGESFEACSSSPHLEIFRKKGIEVLLLSDRVDEWTVTHLTEFDGKPLQAITKGELDLSKFAGGEEEAKDEEAEKAQEEALKPITERMAKVLEGQVKEVRLSHRLTESPACLVGDAHDMSATLERLLKEAGQEVPTAKRILEINPSHALLKRLADEADEEKFGELTHVLHDQALLAEGGQLKDPSQFVKRLNKLLMG.

Residues 1-349 (MSAATETEVR…SADLPLNVSR (349 aa)) are a; substrate-binding. Positions 216–238 (ELPPAPPAKEGEEPEPPKTPEWE) are disordered. A compositionally biased stretch (basic and acidic residues) spans 224 to 236 (KEGEEPEPPKTPE). The interval 350–570 (EILQQNRQVE…AHDMSATLER (221 aa)) is b. The interval 571–642 (LLKEAGQEVP…VKRLNKLLMG (72 aa)) is c.

The protein belongs to the heat shock protein 90 family. As to quaternary structure, homodimer.

The protein localises to the cytoplasm. Molecular chaperone. Has ATPase activity. The polypeptide is Chaperone protein HtpG (Magnetococcus marinus (strain ATCC BAA-1437 / JCM 17883 / MC-1)).